A 232-amino-acid polypeptide reads, in one-letter code: Acyl-protein thioesterase 1 (232 aa).

Residues serine 125, aspartate 179, and histidine 212 each act as charge relay system in the active site.

Belongs to the AB hydrolase superfamily. AB hydrolase 2 family.

The protein resides in the cytoplasm. The protein localises to the nucleus. The catalysed reaction is S-hexadecanoyl-L-cysteinyl-[protein] + H2O = L-cysteinyl-[protein] + hexadecanoate + H(+). Hydrolyzes fatty acids from S-acylated cysteine residues in proteins with a strong preference for palmitoylated G-alpha proteins over other acyl substrates. Mediates the deacylation of G-alpha proteins such as GPA1 in vivo, but has weak or no activity toward palmitoylated Ras proteins. Has weak lysophospholipase activity in vitro; however such activity may not exist in vivo. The protein is Acyl-protein thioesterase 1 of Debaryomyces hansenii (strain ATCC 36239 / CBS 767 / BCRC 21394 / JCM 1990 / NBRC 0083 / IGC 2968) (Yeast).